A 76-amino-acid polypeptide reads, in one-letter code: Probable insulin-like peptide alpha-type 1 (76 aa).

The first 24 residues, 1 to 24, serve as a signal peptide directing secretion; it reads MKTYSFFVLFIVFIFFISSSKSHS. 3 disulfide bridges follow: Cys-32-Cys-60, Cys-44-Cys-73, and Cys-48-Cys-74.

It belongs to the insulin family.

It is found in the secreted. In Caenorhabditis elegans, this protein is Probable insulin-like peptide alpha-type 1 (ins-21).